A 312-amino-acid polypeptide reads, in one-letter code: MEESSRILVVGGTGYIGRRIVKASIALGHPTFILFRKEVVSDVEKVEMLLSFKKNGAKLLEASFDDHESLVDAVKQVDVVISAVAGNHMRHHILQQLKLVEAIKEAGNIKRFVPSEFGMDPGLMDHAMAPGNIVFIDKIKVREAIEAAAIPHTYISANIFAGYLVGGLAQLGRVMPPSDKVFLYGDGNVKAVWIDEEDVGIYTIKAIDDPRTLNKTVYIRPPLNVLSQKEVVEKWEKLSRKSLDKIYMSVEDFLAGMEGQSYGEKIGISHFYQMFYKGDLYNFEIGPNGVEASQLYPGVKYTTVDSYMERYL.

NADP(+) contacts are provided by residues 11 to 17, Arg36, and Lys45; that span reads GGTGYIG. The Proton acceptor role is filled by Lys138. Arg142 contacts NADP(+). His270 lines the substrate pocket.

This sequence belongs to the NmrA-type oxidoreductase family. Isoflavone reductase subfamily. Dimer.

The enzyme catalyses (+)-lariciresinol + NADP(+) = (+)-pinoresinol + NADPH + H(+). It carries out the reaction (-)-secoisolariciresinol + NADP(+) = (+)-lariciresinol + NADPH + H(+). Reductase involved in lignan biosynthesis. Catalyzes the enantioselective sequential conversion of (+)-pinoresinol into (+)-lariciresinol and of (+)-lariciresinol into (-)-secoisolariciresinol. Abstracts the 4R-hydride from the NADPH cofactor during catalysis. The chain is Bifunctional pinoresinol-lariciresinol reductase from Thuja plicata (Western red-cedar).